Consider the following 51-residue polypeptide: Large ribosomal subunit protein eL39 (51 aa).

Residues 32–51 (KRRVTRSPARRHWRRQKLKA) form a disordered region.

It belongs to the eukaryotic ribosomal protein eL39 family.

In Pyrobaculum calidifontis (strain DSM 21063 / JCM 11548 / VA1), this protein is Large ribosomal subunit protein eL39.